We begin with the raw amino-acid sequence, 633 residues long: Terminal nucleotidyltransferase 4B (633 aa).

The segment at 1–115 (MFRSGERPLG…GGGRADGGGG (115 aa)) is disordered. Polar residues predominate over residues 25-34 (ETTNNNNNHH). 2 stretches are compositionally biased toward low complexity: residues 36-52 (PAAW…ASPV) and 60-70 (RPAAALPASES). Residues 87–98 (ASTYGLNYSLLQ) are compositionally biased toward polar residues. Over residues 103–115 (RAAGGGRADGGGG) the composition is skewed to gly residues. Positions 191 and 193 each coordinate Mg(2+). The ATP site is built by Gly254, Lys279, Ser297, Tyr298, Asn382, and Arg386. A PAP-associated domain is found at 322-382 (NYGVLLIEFF…YIEDPLQPGN (61 aa)). A disordered region spans residues 484 to 633 (LGKCRSNASE…RDAPLSELCR (150 aa)). The span at 492–519 (SEPLSKHSSNSSSGPVSSSSATQSSSSD) shows a compositional bias: low complexity. Lys531 is covalently cross-linked (Glycyl lysine isopeptide (Lys-Gly) (interchain with G-Cter in SUMO2)). Polar residues predominate over residues 542-552 (RVGSQDVSLEV). Ser545 is subject to Phosphoserine. Glycyl lysine isopeptide (Lys-Gly) (interchain with G-Cter in SUMO2) cross-links involve residues Lys558, Lys573, and Lys587. Residues 559–614 (MQSTQTTNTPNNANKSQHGSARLFRSSSKGFQGTAQTSHGALMTSKQHQGKSNTQY) are compositionally biased toward polar residues. Residues 618–624 (KKRRHKR) carry the Basic, involved in binding of the RNA primer motif.

This sequence belongs to the DNA polymerase type-B-like family. In terms of assembly, component of a nucleolar TRAMP-like complex, an ATP-dependent exosome regulatory complex consisting of a helicase (MTREX), an oligadenylate polymerase (TENT4B or TENT4A), and a substrate specific RNA-binding factor (ZCCHC7 or ZCCHC8). Several TRAMP-like complexes exist with specific compositions and are associated with nuclear, or nucleolar RNA exosomes. Mg(2+) is required as a cofactor. It depends on Mn(2+) as a cofactor.

It is found in the nucleus. The protein resides in the nucleolus. Its subcellular location is the cytoplasm. It catalyses the reaction RNA(n) + ATP = RNA(n)-3'-adenine ribonucleotide + diphosphate. Terminal nucleotidyltransferase that catalyzes preferentially the transfer of ATP and GTP on RNA 3' poly(A) tail creating a heterogeneous 3' poly(A) tail leading to mRNAs stabilization by protecting mRNAs from active deadenylation. Also functions as a catalytic subunit of a TRAMP-like complex which has a poly(A) RNA polymerase activity and is involved in a post-transcriptional quality control mechanism. Polyadenylation with short oligo(A) tails is required for the degradative activity of the exosome on several of its nuclear RNA substrates. Doesn't need a cofactor for polyadenylation activity (in vitro). Plays a role in replication-dependent histone mRNA degradation, probably through terminal uridylation of mature histone mRNAs. May play a role in sister chromatid cohesion. The polypeptide is Terminal nucleotidyltransferase 4B (Mus musculus (Mouse)).